The chain runs to 357 residues: Probable nitronate monooxygenase (357 aa).

FMN contacts are provided by residues Asn-71, Gln-175, Gly-180, Gly-219, and 238–241 (QMGT).

The protein belongs to the nitronate monooxygenase family. NMO class I subfamily. Requires FMN as cofactor.

It catalyses the reaction 3 propionate 3-nitronate + 3 O2 + H2O = 3 3-oxopropanoate + 2 nitrate + nitrite + H2O2 + 3 H(+). Functionally, nitronate monooxygenase that uses molecular oxygen to catalyze the oxidative denitrification of alkyl nitronates. Acts on propionate 3-nitronate (P3N), the presumed physiological substrate. Probably functions in the detoxification of P3N, a metabolic poison produced by plants and fungi as a defense mechanism. The protein is Probable nitronate monooxygenase of Staphylococcus haemolyticus (strain JCSC1435).